Consider the following 283-residue polypeptide: 4-hydroxy-3-methylbut-2-enyl diphosphate reductase (283 aa).

Cysteine 12 is a binding site for [4Fe-4S] cluster. Residues histidine 41 and histidine 74 each coordinate (2E)-4-hydroxy-3-methylbut-2-enyl diphosphate. Residues histidine 41 and histidine 74 each contribute to the dimethylallyl diphosphate site. Isopentenyl diphosphate is bound by residues histidine 41 and histidine 74. Cysteine 96 serves as a coordination point for [4Fe-4S] cluster. Histidine 124 serves as a coordination point for (2E)-4-hydroxy-3-methylbut-2-enyl diphosphate. Histidine 124 serves as a coordination point for dimethylallyl diphosphate. Histidine 124 is a binding site for isopentenyl diphosphate. Glutamate 126 acts as the Proton donor in catalysis. A (2E)-4-hydroxy-3-methylbut-2-enyl diphosphate-binding site is contributed by threonine 161. [4Fe-4S] cluster is bound at residue cysteine 189. 3 residues coordinate (2E)-4-hydroxy-3-methylbut-2-enyl diphosphate: serine 217, asparagine 219, and serine 261. Residues serine 217, asparagine 219, and serine 261 each contribute to the dimethylallyl diphosphate site. Isopentenyl diphosphate contacts are provided by serine 217, asparagine 219, and serine 261.

It belongs to the IspH family. [4Fe-4S] cluster serves as cofactor.

The enzyme catalyses isopentenyl diphosphate + 2 oxidized [2Fe-2S]-[ferredoxin] + H2O = (2E)-4-hydroxy-3-methylbut-2-enyl diphosphate + 2 reduced [2Fe-2S]-[ferredoxin] + 2 H(+). It catalyses the reaction dimethylallyl diphosphate + 2 oxidized [2Fe-2S]-[ferredoxin] + H2O = (2E)-4-hydroxy-3-methylbut-2-enyl diphosphate + 2 reduced [2Fe-2S]-[ferredoxin] + 2 H(+). It participates in isoprenoid biosynthesis; dimethylallyl diphosphate biosynthesis; dimethylallyl diphosphate from (2E)-4-hydroxy-3-methylbutenyl diphosphate: step 1/1. It functions in the pathway isoprenoid biosynthesis; isopentenyl diphosphate biosynthesis via DXP pathway; isopentenyl diphosphate from 1-deoxy-D-xylulose 5-phosphate: step 6/6. In terms of biological role, catalyzes the conversion of 1-hydroxy-2-methyl-2-(E)-butenyl 4-diphosphate (HMBPP) into a mixture of isopentenyl diphosphate (IPP) and dimethylallyl diphosphate (DMAPP). Acts in the terminal step of the DOXP/MEP pathway for isoprenoid precursor biosynthesis. This is 4-hydroxy-3-methylbut-2-enyl diphosphate reductase from Anaeromyxobacter sp. (strain Fw109-5).